Reading from the N-terminus, the 310-residue chain is uncharacterized protein (310 aa).

Residues 269–307 (DLAELERKKSLAEIHKKAAMAKKREEKKKIKQELKKSAK) adopt a coiled-coil conformation. Residues 290–304 (KKREEKKKIKQELKK) show a composition bias toward basic and acidic residues. Residues 290-310 (KKREEKKKIKQELKKSAKGKK) are disordered.

This is an uncharacterized protein from Magallana gigas (Pacific oyster).